We begin with the raw amino-acid sequence, 416 residues long: Choline/ethanolaminephosphotransferase 1 (416 aa).

Positions 1–20 (MSGHRSTRKRCGDSHPESPV) are disordered. Ser-18 bears the Phosphoserine mark. At Thr-40 the chain carries Phosphothreonine. Residue Asn-86 coordinates CDP-choline. 2 consecutive transmembrane segments (helical) span residues 89–108 (TIIGLSINICTTILLVFYCP) and 116–133 (LWAYIACACGLFIYQSLD). Asp-133 is a binding site for Mg(2+). A glycan (N-linked (GlcNAc...) asparagine) is linked at Asn-144. A CDP-choline-binding site is contributed by Glu-151. Residue Asp-154 coordinates Mg(2+). Residue His-155 is the Proton acceptor of the active site. 8 consecutive transmembrane segments (helical) span residues 156 to 176 (GCDSLSTVFVVLGTCIAVQLG), 180 to 199 (DWMFFCCFAGTFMFYCAHWQ), 210 to 230 (IIDVTEVQIFIIIMHLLAVIG), 246 to 267 (MKIFPALCTVAGTIFSCTNYFR), 286 to 306 (VLSPFLHIGSVITLAAMIYKK), 315 to 334 (HPCLYILTFGFVSAKITNKL), 349 to 363 (TAFIGPALLFLDQYF), and 368 to 388 (DEYIVLWIALVFSFFDLIRYC). Asp-158 serves as a coordination point for Mg(2+).

Belongs to the CDP-alcohol phosphatidyltransferase class-I family. In terms of assembly, homodimer. Mg(2+) serves as cofactor. Mn(2+) is required as a cofactor. Ubiquitously expressed.

It localises to the endoplasmic reticulum membrane. The protein localises to the nucleus membrane. The catalysed reaction is CDP-ethanolamine + a 1,2-diacyl-sn-glycerol = a 1,2-diacyl-sn-glycero-3-phosphoethanolamine + CMP + H(+). The enzyme catalyses CDP-choline + a 1,2-diacyl-sn-glycerol = a 1,2-diacyl-sn-glycero-3-phosphocholine + CMP + H(+). It carries out the reaction 1-O-alkyl-2-acyl-sn-glycerol + CDP-choline = a 1-O-alkyl-2-acyl-sn-glycero-3-phosphocholine + CMP + H(+). It catalyses the reaction a 1-O-(1Z-alkenyl)-2-acyl-sn-glycerol + CDP-choline = a 1-O-(1Z-alkenyl)-2-acyl-sn-glycero-3-phosphocholine + CMP + H(+). The catalysed reaction is 1,2-dioctanoyl-sn-glycerol + CDP-choline = 1,2-dioctanoyl-sn-glycero-3-phosphocholine + CMP + H(+). The enzyme catalyses 1,2-didecanoyl-sn-glycerol + CDP-choline = 1,2-didecanoyl-sn-glycero-3-phosphocholine + CMP + H(+). It carries out the reaction CDP-choline + 1,2-di-(9Z-octadecenoyl)-sn-glycerol = 1,2-di-(9Z-octadecenoyl)-sn-glycero-3-phosphocholine + CMP + H(+). It catalyses the reaction 1-hexadecanoyl-2-(9Z-octadecenoyl)-sn-glycerol + CDP-choline = 1-hexadecanoyl-2-(9Z-octadecenoyl)-sn-glycero-3-phosphocholine + CMP + H(+). The catalysed reaction is CDP-ethanolamine + 1,2-di-(9Z-octadecenoyl)-sn-glycerol = 1,2-di-(9Z-octadecenoyl)-sn-glycero-3-phosphoethanolamine + CMP + H(+). The enzyme catalyses 1-hexadecanoyl-2-(9Z-octadecenoyl)-sn-glycerol + CDP-ethanolamine = 1-hexadecanoyl-2-(9Z-octadecenoyl)-sn-glycero-3-phosphoethanolamine + CMP + H(+). It carries out the reaction 1-hexadecanoyl-2-(4Z,7Z,10Z,13Z,16Z,19Z-docosahexaenoyl)-sn-glycerol + CDP-choline = 1-hexadecanoyl-2-(4Z,7Z,10Z,13Z,16Z,19Z-docosahexaenoyl)-sn-glycero-3-phosphocholine + CMP + H(+). It catalyses the reaction 1,2-di-(9Z-hexadecenoyl)-sn-glycerol + CDP-choline = 1,2-di-(9Z-hexadecenoyl)-sn-glycero-3-phosphocholine + CMP + H(+). The catalysed reaction is 1,2-di-(9Z-hexadecenoyl)-sn-glycerol + CDP-ethanolamine = 1,2-di-(9Z-hexadecenoyl)-sn-glycero-3-phosphoethanolamine + CMP + H(+). The enzyme catalyses 1-O-hexadecyl-2-acetyl-sn-glycerol + CDP-choline = 1-O-hexadecyl-2-acetyl-sn-glycero-3-phosphocholine + CMP + H(+). It carries out the reaction 1-O-hexadecyl-2-(5Z,8Z,11Z,14Z-eicosatetraenoyl)-sn-glycerol + CDP-choline = 1-O-hexadecyl-2-(5Z,8Z,11Z,14Z)-eicosatetraenoyl-sn-glycero-3-phosphocholine + CMP + H(+). Its pathway is phospholipid metabolism; phosphatidylethanolamine biosynthesis; phosphatidylethanolamine from ethanolamine: step 3/3. It participates in phospholipid metabolism; phosphatidylcholine biosynthesis; phosphatidylcholine from phosphocholine: step 2/2. Functionally, catalyzes both phosphatidylcholine and phosphatidylethanolamine biosynthesis from CDP-choline and CDP-ethanolamine, respectively. Involved in protein-dependent process of phospholipid transport to distribute phosphatidyl choline to the lumenal surface. Has a higher cholinephosphotransferase activity than ethanolaminephosphotransferase activity. This Homo sapiens (Human) protein is Choline/ethanolaminephosphotransferase 1.